Consider the following 662-residue polypeptide: Protein Aster-C (662 aa).

The interval 1 to 33 (MEGALTARQIVNEGDSSLATELQEEPEESPGPV) is disordered. Positions 70-176 (EYRQQFTHLP…LIIFRLWQNV (107 aa)) constitute a GRAM domain. Positions 212–294 (VEENVQPRSP…EKRISRAPSK (83 aa)) are disordered. Residues 240-250 (VSFTQESVSRA) show a composition bias toward polar residues. Basic and acidic residues predominate over residues 265–276 (LGKEDSQSERNV). The VASt domain occupies 326–497 (QGRLYINRVF…DLLMEESVLS (172 aa)). Positions 506–530 (HSSLRRRRRTLNRTAEPVPKLSSQR) are disordered. Residues 507–516 (SSLRRRRRTL) show a composition bias toward basic residues. A helical transmembrane segment spans residues 557–577 (LIVVMSIFLLLLVLLNVTLFL).

As to expression, highly expressed in the liver. Also found in the testis.

It localises to the endoplasmic reticulum membrane. The protein localises to the cell membrane. Functionally, cholesterol transporter that mediates non-vesicular transport of cholesterol from the plasma membrane (PM) to the endoplasmic reticulum (ER). Contains unique domains for binding cholesterol and the PM, thereby serving as a molecular bridge for the transfer of cholesterol from the PM to the ER. Plays a crucial role in cholesterol homeostasis and has the unique ability to localize to the PM based on the level of membrane cholesterol. In lipid-poor conditions localizes to the ER membrane and in response to excess cholesterol in the PM is recruited to the endoplasmic reticulum-plasma membrane contact sites (EPCS) which is mediated by the GRAM domain. At the EPCS, the sterol-binding VASt/ASTER domain binds to the cholesterol in the PM and facilitates its transfer from the PM to ER. This chain is Protein Aster-C (Gramd1c), found in Mus musculus (Mouse).